The sequence spans 166 residues: Large ribosomal subunit protein uL10 (166 aa).

This sequence belongs to the universal ribosomal protein uL10 family. Part of the ribosomal stalk of the 50S ribosomal subunit. The N-terminus interacts with L11 and the large rRNA to form the base of the stalk. The C-terminus forms an elongated spine to which L12 dimers bind in a sequential fashion forming a multimeric L10(L12)X complex.

In terms of biological role, forms part of the ribosomal stalk, playing a central role in the interaction of the ribosome with GTP-bound translation factors. The sequence is that of Large ribosomal subunit protein uL10 from Shewanella baltica (strain OS223).